A 785-amino-acid polypeptide reads, in one-letter code: LPS-assembly protein LptD (785 aa).

The signal sequence occupies residues 1–58 (MSCSCLCMSLYRGADRIGRFYTAHCPQDMALCMHRQKLNPLALALAAAFALNAPAALA).

It belongs to the LptD family. As to quaternary structure, component of the lipopolysaccharide transport and assembly complex. Interacts with LptE and LptA.

It is found in the cell outer membrane. Together with LptE, is involved in the assembly of lipopolysaccharide (LPS) at the surface of the outer membrane. This Chromobacterium violaceum (strain ATCC 12472 / DSM 30191 / JCM 1249 / CCUG 213 / NBRC 12614 / NCIMB 9131 / NCTC 9757 / MK) protein is LPS-assembly protein LptD.